A 29-amino-acid chain; its full sequence is Cytochrome b6-f complex subunit 8 (29 aa).

A helical transmembrane segment spans residues 3 to 23; sequence ILTLGWVGLLGLFTYSIAMVV.

Belongs to the PetN family. In terms of assembly, the 4 large subunits of the cytochrome b6-f complex are cytochrome b6, subunit IV (17 kDa polypeptide, PetD), cytochrome f and the Rieske protein, while the 4 small subunits are PetG, PetL, PetM and PetN. The complex functions as a dimer.

It is found in the cellular thylakoid membrane. Component of the cytochrome b6-f complex, which mediates electron transfer between photosystem II (PSII) and photosystem I (PSI), cyclic electron flow around PSI, and state transitions. In Cyanothece sp. (strain PCC 7425 / ATCC 29141), this protein is Cytochrome b6-f complex subunit 8.